Here is a 1045-residue protein sequence, read N- to C-terminus: FERM, ARHGEF and pleckstrin domain-containing protein 1 (1045 aa).

The disordered stretch occupies residues 1-37; the sequence is MGEIEQRPTPGSRLGAPENSGISTLERGQKPPPTPSG. Residues Ser20 and Ser23 each carry the phosphoserine modification. Thr24 carries the phosphothreonine modification. The FERM domain maps to 40-320; the sequence is VSIKIQMLDD…EHHAFFRLFE (281 aa). Phosphoserine is present on residues Ser340, Ser373, Ser389, Ser403, Ser418, Ser427, and Ser433. The segment at 361–534 is disordered; the sequence is FERKHSKIHS…TDDEDEGRRK (174 aa). The span at 373–396 shows a compositional bias: polar residues; sequence SLASQPTELNSEVLEQSQQSTSLT. Composition is skewed to polar residues over residues 471–489 and 496–511; these read TGSL…NSQG and VTLS…QASP. Phosphoserine occurs at positions 510 and 514. Residues 540 to 730 form the DH domain; that stretch reads KAYFIAKEVS…TEMVAQLHGT (191 aa). The PH 1 domain maps to 759–856; sequence EFIRLGSLSK…WVEDIQMAID (98 aa). Phosphoserine occurs at positions 833, 872, and 878. Residues 864 to 903 form a disordered region; sequence PAPEFLASSPPDNKSPDEATAADQESEDDLSASRTSLERQ. Thr883 is modified (phosphothreonine). Ser889, Ser896, and Ser899 each carry phosphoserine. The 98-residue stretch at 932 to 1029 folds into the PH 2 domain; it reads ENQLSGNLLR…WMEVIRSATS (98 aa).

In terms of assembly, interacts with CADM1. Interacts with RAC1. In terms of tissue distribution, detected in cAMP-treated chondrocytes, but not in untreated chondrocytes. Detected in fetal brain, heart and spleen, and in adult testis, kidney and lung.

It localises to the cell membrane. It is found in the synapse. Its subcellular location is the synaptosome. The protein localises to the cytoplasm. The protein resides in the cytosol. It localises to the cell projection. It is found in the filopodium. Its subcellular location is the dendrite. The protein localises to the dendritic spine. Its function is as follows. Functions as a guanine nucleotide exchange factor for RAC1. May play a role in semaphorin signaling. Plays a role in the assembly and disassembly of dendritic filopodia, the formation of dendritic spines, regulation of dendrite length and ultimately the formation of synapses. The protein is FERM, ARHGEF and pleckstrin domain-containing protein 1 (FARP1) of Homo sapiens (Human).